Here is a 173-residue protein sequence, read N- to C-terminus: MNSQLTLRALERGDLRFIHNLNNNRNIMSYWFEEPYESFDELEELYNKHIHDNAERRFVVEDAQKNLIGLVELIEINYIHRSAEFQIIIAPEHQGKGFARTLINRALDYSFTILNLHKIYLHVAVENPKAVHLYEECGFVEEGHLVEEFFINGRYQDVKRMYILQSKYLNRSE.

The N-acetyltransferase domain occupies 5-162 (LTLRALERGD…GRYQDVKRMY (158 aa)). Residues M28, E33, E41, and 49–52 (HIHD) each bind spermine. E33 contributes to the Mg(2+) binding site. Spermidine contacts are provided by E33 and E41. E75 is a Mg(2+) binding site. 84–86 (EFQ) lines the spermine pocket. Acetyl-CoA is bound by residues 87-89 (III), 94-100 (QGKGFAR), and 127-136 (NPKAVHLYEE). Catalysis depends on Y134, which acts as the Proton donor.

It belongs to the acetyltransferase family. As to quaternary structure, homododecamer; dimer of hexamers. Exists in solution in a variety of protein homooligomeric states including dodecamers in an open state. The presence of the polyamines spermidine or spermine shifts the equilibrium to dodecamers and induces the formation of the closed, symmetric dodecamers.

The protein localises to the cytoplasm. The enzyme catalyses an alkane-alpha,omega-diamine + acetyl-CoA = an N-acetylalkane-alpha,omega-diamine + CoA + H(+). It catalyses the reaction spermidine + acetyl-CoA = N(1)-acetylspermidine + CoA + H(+). It carries out the reaction spermidine + acetyl-CoA = N(8)-acetylspermidine + CoA + H(+). The catalysed reaction is spermine + acetyl-CoA = N(1)-acetylspermine + CoA + H(+). Its pathway is amine and polyamine degradation; spermidine degradation. It participates in amine and polyamine degradation; spermine degradation. Allosterically regulated by polyamines. Polyamines trigger conformational changes and induce the symmetric closed dodecameric state of the protein when they bind to their allosteric sites. Involved in the protection against polyamine toxicity by regulating their concentration. Catalyzes the transfer of an acetyl group from acetyl coenzyme A (AcCoA) to the primary amino groups of spermidine to yield N(1)- and N(8)-acetylspermidine. It can use polyamines such as spermine and N(1)-acetylspermine, but not putrescine or cadaverine. This is Spermidine N(1)-acetyltransferase (speG) from Vibrio cholerae serotype O1 (strain ATCC 39315 / El Tor Inaba N16961).